We begin with the raw amino-acid sequence, 552 residues long: Dihydroxy-acid dehydratase (552 aa).

Cys-46 is a [2Fe-2S] cluster binding site. Asp-78 is a Mg(2+) binding site. Position 119 (Cys-119) interacts with [2Fe-2S] cluster. Residues Asp-120 and Lys-121 each contribute to the Mg(2+) site. Lys-121 is subject to N6-carboxylysine. Residue Cys-191 participates in [2Fe-2S] cluster binding. Glu-442 is a Mg(2+) binding site. The active-site Proton acceptor is Ser-468.

It belongs to the IlvD/Edd family. Homodimer. [2Fe-2S] cluster is required as a cofactor. It depends on Mg(2+) as a cofactor.

It catalyses the reaction (2R)-2,3-dihydroxy-3-methylbutanoate = 3-methyl-2-oxobutanoate + H2O. It carries out the reaction (2R,3R)-2,3-dihydroxy-3-methylpentanoate = (S)-3-methyl-2-oxopentanoate + H2O. It functions in the pathway amino-acid biosynthesis; L-isoleucine biosynthesis; L-isoleucine from 2-oxobutanoate: step 3/4. Its pathway is amino-acid biosynthesis; L-valine biosynthesis; L-valine from pyruvate: step 3/4. Its function is as follows. Functions in the biosynthesis of branched-chain amino acids. Catalyzes the dehydration of (2R,3R)-2,3-dihydroxy-3-methylpentanoate (2,3-dihydroxy-3-methylvalerate) into 2-oxo-3-methylpentanoate (2-oxo-3-methylvalerate) and of (2R)-2,3-dihydroxy-3-methylbutanoate (2,3-dihydroxyisovalerate) into 2-oxo-3-methylbutanoate (2-oxoisovalerate), the penultimate precursor to L-isoleucine and L-valine, respectively. The protein is Dihydroxy-acid dehydratase of Picrophilus torridus (strain ATCC 700027 / DSM 9790 / JCM 10055 / NBRC 100828 / KAW 2/3).